The sequence spans 522 residues: Amine oxidase [flavin-containing] (522 aa).

The Cytoplasmic segment spans residues 1 to 492 (MTAQNTFDVI…FWERNLPSVG (492 aa)). Cys-399 is subject to S-8alpha-FAD cysteine. Residues 493 to 513 (GFINFLAASVLSVATAAGMLA) form a helical; Anchor for type IV membrane protein membrane-spanning segment. The Mitochondrial intermembrane segment spans residues 514-522 (YQKGLLTRS).

The protein belongs to the flavin monoamine oxidase family. FAD is required as a cofactor.

Its subcellular location is the mitochondrion outer membrane. The enzyme catalyses a secondary aliphatic amine + O2 + H2O = a primary amine + an aldehyde + H2O2. Catalyzes the oxidative deamination of biogenic and xenobiotic amines and has important functions in the metabolism of neuroactive and vasoactive amines in the central nervous system and peripheral tissues. Oxidizes both 5-hydroxytryptamine (5-HT) and beta-phenylethylamine (PEA). This Oncorhynchus mykiss (Rainbow trout) protein is Amine oxidase [flavin-containing] (mao).